A 101-amino-acid polypeptide reads, in one-letter code: NAD(P)H-quinone oxidoreductase subunit 4L, chloroplastic (101 aa).

3 helical membrane-spanning segments follow: residues 2–22, 32–52, and 61–81; these read MLEH…YGLI, MCLE…SDFF, and IFSI…PAIV.

This sequence belongs to the complex I subunit 4L family. NDH is composed of at least 16 different subunits, 5 of which are encoded in the nucleus.

It localises to the plastid. The protein localises to the chloroplast thylakoid membrane. It carries out the reaction a plastoquinone + NADH + (n+1) H(+)(in) = a plastoquinol + NAD(+) + n H(+)(out). It catalyses the reaction a plastoquinone + NADPH + (n+1) H(+)(in) = a plastoquinol + NADP(+) + n H(+)(out). Functionally, NDH shuttles electrons from NAD(P)H:plastoquinone, via FMN and iron-sulfur (Fe-S) centers, to quinones in the photosynthetic chain and possibly in a chloroplast respiratory chain. The immediate electron acceptor for the enzyme in this species is believed to be plastoquinone. Couples the redox reaction to proton translocation, and thus conserves the redox energy in a proton gradient. The sequence is that of NAD(P)H-quinone oxidoreductase subunit 4L, chloroplastic from Lotus japonicus (Lotus corniculatus var. japonicus).